The following is a 214-amino-acid chain: uncharacterized protein (214 aa).

2 helical membrane passes run 19–39 and 50–70; these read IAIF…SYIL and LALF…LLIG.

Its subcellular location is the cell membrane. This is an uncharacterized protein from Methanocaldococcus jannaschii (strain ATCC 43067 / DSM 2661 / JAL-1 / JCM 10045 / NBRC 100440) (Methanococcus jannaschii).